Here is a 388-residue protein sequence, read N- to C-terminus: Succinate--CoA ligase [ADP-forming] subunit beta (388 aa).

Residues 9–244 form the ATP-grasp domain; it reads KQLFAEFGLP…PSQEDEREAH (236 aa). ATP contacts are provided by residues K46, 53-55, E99, S102, and E107; that span reads GRG. The Mg(2+) site is built by N199 and D213. Residues N264 and 321–323 each bind substrate; that span reads GIV.

Belongs to the succinate/malate CoA ligase beta subunit family. In terms of assembly, heterotetramer of two alpha and two beta subunits. Mg(2+) is required as a cofactor.

The enzyme catalyses succinate + ATP + CoA = succinyl-CoA + ADP + phosphate. It carries out the reaction GTP + succinate + CoA = succinyl-CoA + GDP + phosphate. It functions in the pathway carbohydrate metabolism; tricarboxylic acid cycle; succinate from succinyl-CoA (ligase route): step 1/1. In terms of biological role, succinyl-CoA synthetase functions in the citric acid cycle (TCA), coupling the hydrolysis of succinyl-CoA to the synthesis of either ATP or GTP and thus represents the only step of substrate-level phosphorylation in the TCA. The beta subunit provides nucleotide specificity of the enzyme and binds the substrate succinate, while the binding sites for coenzyme A and phosphate are found in the alpha subunit. This Vibrio campbellii (strain ATCC BAA-1116) protein is Succinate--CoA ligase [ADP-forming] subunit beta.